Consider the following 294-residue polypeptide: Elongation factor Ts (294 aa).

Positions 82 to 85 are involved in Mg(2+) ion dislocation from EF-Tu; the sequence is TDFV.

This sequence belongs to the EF-Ts family.

It localises to the cytoplasm. Associates with the EF-Tu.GDP complex and induces the exchange of GDP to GTP. It remains bound to the aminoacyl-tRNA.EF-Tu.GTP complex up to the GTP hydrolysis stage on the ribosome. This chain is Elongation factor Ts, found in Psychrobacter cryohalolentis (strain ATCC BAA-1226 / DSM 17306 / VKM B-2378 / K5).